Consider the following 194-residue polypeptide: ATP-dependent Clp protease proteolytic subunit 3 (194 aa).

Serine 96 (nucleophile) is an active-site residue. The active site involves histidine 121.

The protein belongs to the peptidase S14 family. Fourteen ClpP subunits assemble into 2 heptameric rings which stack back to back to give a disk-like structure with a central cavity, resembling the structure of eukaryotic proteasomes.

The protein resides in the cytoplasm. It catalyses the reaction Hydrolysis of proteins to small peptides in the presence of ATP and magnesium. alpha-casein is the usual test substrate. In the absence of ATP, only oligopeptides shorter than five residues are hydrolyzed (such as succinyl-Leu-Tyr-|-NHMec, and Leu-Tyr-Leu-|-Tyr-Trp, in which cleavage of the -Tyr-|-Leu- and -Tyr-|-Trp bonds also occurs).. Its function is as follows. Cleaves peptides in various proteins in a process that requires ATP hydrolysis. Has a chymotrypsin-like activity. Plays a major role in the degradation of misfolded proteins. In Prochlorococcus marinus (strain NATL2A), this protein is ATP-dependent Clp protease proteolytic subunit 3.